The sequence spans 265 residues: Tryptophan synthase alpha chain (265 aa).

Catalysis depends on proton acceptor residues Glu-47 and Asp-58.

It belongs to the TrpA family. In terms of assembly, tetramer of two alpha and two beta chains.

It catalyses the reaction (1S,2R)-1-C-(indol-3-yl)glycerol 3-phosphate + L-serine = D-glyceraldehyde 3-phosphate + L-tryptophan + H2O. The protein operates within amino-acid biosynthesis; L-tryptophan biosynthesis; L-tryptophan from chorismate: step 5/5. Its function is as follows. The alpha subunit is responsible for the aldol cleavage of indoleglycerol phosphate to indole and glyceraldehyde 3-phosphate. This is Tryptophan synthase alpha chain from Methanoregula boonei (strain DSM 21154 / JCM 14090 / 6A8).